We begin with the raw amino-acid sequence, 262 residues long: MESGGLGCAVCVLTGASRGFGRALAPRLAQLLAPGSVLLLCARSDSALRRLEEELGAQQPGLRVVRAAADLGTEAGLRQVLRAVRELPKPEGLQRLLLINNAGTLGDVSKGVLNVNDPAEVNNYWALNLTSMLCLTSGTLNAFPDSPGLSKTVVNISSLCALQPFKGWGLYCTGKAARDMLCQVLAAEEPSVRVLSYAPGPLDTDMQQLARETSMDPELRNRLQRLKSEGELVDCGTSAQKLLNLLQKDTFQSGAHVDFYDN.

Residue Met1 is modified to N-acetylmethionine. Residues 15 to 21 (GASRGFG) and 43 to 44 (RS) each bind NADP(+). Ser46 is modified (phosphoserine). 70 to 71 (DL) contributes to the NADP(+) binding site. Residues 158 to 159 (SL) and Tyr171 each bind substrate. Position 175 (Lys175) interacts with NADP(+). Ser196 is modified (phosphoserine). Substrate is bound at residue Gly200. 202-207 (LDTDMQ) contacts NADP(+). Ser214 is subject to Phosphoserine. Substrate is bound at residue Asp258.

It belongs to the sepiapterin reductase family. In terms of assembly, homodimer.

The protein localises to the cytoplasm. It catalyses the reaction L-erythro-7,8-dihydrobiopterin + NADP(+) = L-sepiapterin + NADPH + H(+). The catalysed reaction is (6R)-L-erythro-5,6,7,8-tetrahydrobiopterin + 2 NADP(+) = 6-pyruvoyl-5,6,7,8-tetrahydropterin + 2 NADPH + 2 H(+). The enzyme catalyses (S)-benzoin + NADP(+) = benzil + NADPH + H(+). Functionally, catalyzes the final one or two reductions in tetra-hydrobiopterin biosynthesis to form 5,6,7,8-tetrahydrobiopterin. The enzyme also catalyzes the reduction of benzil to (S)-benzoin. The chain is Sepiapterin reductase (SPR) from Meriones unguiculatus (Mongolian jird).